Consider the following 467-residue polypeptide: UDP-N-acetylmuramate--L-alanine ligase (467 aa).

Residue 114-120 (GTHGKTT) participates in ATP binding.

Belongs to the MurCDEF family.

The protein localises to the cytoplasm. The catalysed reaction is UDP-N-acetyl-alpha-D-muramate + L-alanine + ATP = UDP-N-acetyl-alpha-D-muramoyl-L-alanine + ADP + phosphate + H(+). It functions in the pathway cell wall biogenesis; peptidoglycan biosynthesis. Functionally, cell wall formation. This is UDP-N-acetylmuramate--L-alanine ligase from Nitrobacter hamburgensis (strain DSM 10229 / NCIMB 13809 / X14).